The primary structure comprises 423 residues: SH2 domain-containing protein 5 (423 aa).

Positions 28–146 (AQYVGSFPVD…LLCRSFQLAY (119 aa)) constitute a PID domain. Residues 296 to 392 (WAFAGISRPC…LDMGRLNPTY (97 aa)) enclose the SH2 domain. The tract at residues 392–423 (YEEQDCGPPGRPPRTLRPLSHAKSEAELQGLG) is disordered.

As to quaternary structure, interacts with BCR.

It localises to the postsynaptic density. Its function is as follows. May be involved in synaptic plasticity regulation through the control of Rac-GTP levels. In Homo sapiens (Human), this protein is SH2 domain-containing protein 5.